Reading from the N-terminus, the 140-residue chain is Large ribosomal subunit protein uL13 (140 aa).

Belongs to the universal ribosomal protein uL13 family. In terms of assembly, part of the 50S ribosomal subunit.

Its function is as follows. This protein is one of the early assembly proteins of the 50S ribosomal subunit, although it is not seen to bind rRNA by itself. It is important during the early stages of 50S assembly. This Methanosarcina mazei (strain ATCC BAA-159 / DSM 3647 / Goe1 / Go1 / JCM 11833 / OCM 88) (Methanosarcina frisia) protein is Large ribosomal subunit protein uL13.